The following is a 194-amino-acid chain: Peptidyl-tRNA hydrolase (194 aa).

Tyrosine 17 contacts tRNA. Residue histidine 22 is the Proton acceptor of the active site. TRNA-binding residues include tyrosine 68, asparagine 70, and asparagine 116.

The protein belongs to the PTH family. In terms of assembly, monomer.

The protein localises to the cytoplasm. The catalysed reaction is an N-acyl-L-alpha-aminoacyl-tRNA + H2O = an N-acyl-L-amino acid + a tRNA + H(+). In terms of biological role, hydrolyzes ribosome-free peptidyl-tRNAs (with 1 or more amino acids incorporated), which drop off the ribosome during protein synthesis, or as a result of ribosome stalling. Catalyzes the release of premature peptidyl moieties from peptidyl-tRNA molecules trapped in stalled 50S ribosomal subunits, and thus maintains levels of free tRNAs and 50S ribosomes. The polypeptide is Peptidyl-tRNA hydrolase (Chromohalobacter salexigens (strain ATCC BAA-138 / DSM 3043 / CIP 106854 / NCIMB 13768 / 1H11)).